Consider the following 277-residue polypeptide: 3-methyl-2-oxobutanoate hydroxymethyltransferase (277 aa).

The Mg(2+) site is built by D43 and D82. Residues 43–44 (DS), D82, and K112 contribute to the 3-methyl-2-oxobutanoate site. Residue E114 coordinates Mg(2+). The active-site Proton acceptor is the E181.

The protein belongs to the PanB family. In terms of assembly, homodecamer; pentamer of dimers. It depends on Mg(2+) as a cofactor.

Its subcellular location is the cytoplasm. It catalyses the reaction 3-methyl-2-oxobutanoate + (6R)-5,10-methylene-5,6,7,8-tetrahydrofolate + H2O = 2-dehydropantoate + (6S)-5,6,7,8-tetrahydrofolate. It participates in cofactor biosynthesis; (R)-pantothenate biosynthesis; (R)-pantoate from 3-methyl-2-oxobutanoate: step 1/2. Functionally, catalyzes the reversible reaction in which hydroxymethyl group from 5,10-methylenetetrahydrofolate is transferred onto alpha-ketoisovalerate to form ketopantoate. The chain is 3-methyl-2-oxobutanoate hydroxymethyltransferase from Bacillus licheniformis (strain ATCC 14580 / DSM 13 / JCM 2505 / CCUG 7422 / NBRC 12200 / NCIMB 9375 / NCTC 10341 / NRRL NRS-1264 / Gibson 46).